The chain runs to 396 residues: MKILVLNSGSSSIKFKFFDNKIVKASGLVEKIGEQNSKVILKNVLNNESFERELTINNHEEGLSIVNELFKESGILADLNALDGCGHRIVHGGRNLSEHCLVDDYVLKEIDRVSIFAPLHNPAHLAGIKTMIKAAPSVANVAIFDTAFHRTMPDFAYMYALPYDFYDKHNIRRYGFHGTSHAFVSSRAASLLEKDKSELNVISAHLGNGASVCAIEKGKSVDTSMGFTPLEGLVMGTRCGDLDPAILPFISHLKGLTIEEIDTLMNKKSGVYGICGYNDFRDIEREIEQGNDKARLALDMFCYRLVKYIGSYFAVLPKTDAIIFTGGIGENDSLVRQKVCERLAHLGIELDFELNKQRISGERMINHANSKVKVLVIPTDEELEIARITEELIGKN.

Position 7 (N7) interacts with Mg(2+). K14 serves as a coordination point for ATP. R88 contributes to the substrate binding site. D145 functions as the Proton donor/acceptor in the catalytic mechanism. Residues 205–209, 279–281, and 327–331 contribute to the ATP site; these read HLGNG, DFR, and GIGEN. E381 contributes to the Mg(2+) binding site.

Belongs to the acetokinase family. Homodimer. Mg(2+) serves as cofactor. Mn(2+) is required as a cofactor.

The protein localises to the cytoplasm. The catalysed reaction is acetate + ATP = acetyl phosphate + ADP. It participates in metabolic intermediate biosynthesis; acetyl-CoA biosynthesis; acetyl-CoA from acetate: step 1/2. Its function is as follows. Catalyzes the formation of acetyl phosphate from acetate and ATP. Can also catalyze the reverse reaction. In Campylobacter jejuni subsp. jejuni serotype O:23/36 (strain 81-176), this protein is Acetate kinase.